The sequence spans 566 residues: DBIRD complex subunit ZNF326 (566 aa).

Disordered regions lie at residues 19 to 81 and 145 to 180; these read HCGV…ESYD and RPGF…GRGT. Positions 59-73 are enriched in gly residues; that stretch reads SHGGGGGGGGGGGNR. The segment covering 156 to 165 has biased composition (low complexity); that stretch reads SYSSYSSFSS. The Bipartite nuclear localization signal motif lies at 240-263; the sequence is KRKMMPQPYNKPGGTFIKKPKMTK. Residues 314-347 are disordered; it reads FGDSKGEGKSEEEEKRRIEARREKQRRRREKNSE. Residues 317-335 are compositionally biased toward basic and acidic residues; it reads SKGEGKSEEEEKRRIEARR. 2 consecutive C2H2 AKAP95-type zinc fingers follow at residues 359 to 381 and 452 to 475; these read CSFC…SAAH and CSAC…SPDH. Residues 516 to 566 are disordered; the sequence is PFEINDQAQEQQTEEEDKAEEPAEGEEEEEEEEEEETEEQTDFTLDHTEDN. Residues 527–556 show a composition bias toward acidic residues; the sequence is QTEEEDKAEEPAEGEEEEEEEEEEETEEQT.

This sequence belongs to the AKAP95 family. As to quaternary structure, component of the DBIRD complex.

It is found in the nucleus. Core component of the DBIRD complex, a multiprotein complex that acts at the interface between core mRNP particles and RNA polymerase II (RNAPII) and integrates transcript elongation with the regulation of alternative splicing. The polypeptide is DBIRD complex subunit ZNF326 (ZNF326) (Gallus gallus (Chicken)).